Here is a 611-residue protein sequence, read N- to C-terminus: ATP-dependent zinc metalloprotease FtsH (611 aa).

Residue methionine 1 is a topological domain, cytoplasmic. Residues 2-22 (VKNLIFWLVITVVLMSIFQNF) form a helical membrane-spanning segment. Residues 23-98 (NTNDVNNHKV…IGAIPEEPSL (76 aa)) lie on the Extracellular side of the membrane. Residues 99–119 (FISILISWFPMLLLIGVWIFF) traverse the membrane as a helical segment. Residues 120-611 (MRQMQMGGGK…KGWIETDTNK (492 aa)) lie on the Cytoplasmic side of the membrane. 192–199 (GPPGTGKT) is an ATP binding site. Residue histidine 414 participates in Zn(2+) binding. The active site involves glutamate 415. Residues histidine 418 and aspartate 492 each contribute to the Zn(2+) site.

It in the central section; belongs to the AAA ATPase family. This sequence in the C-terminal section; belongs to the peptidase M41 family. Homohexamer. Requires Zn(2+) as cofactor.

It is found in the cell membrane. Functionally, acts as a processive, ATP-dependent zinc metallopeptidase for both cytoplasmic and membrane proteins. Plays a role in the quality control of integral membrane proteins. This is ATP-dependent zinc metalloprotease FtsH from Buchnera aphidicola subsp. Acyrthosiphon pisum (strain APS) (Acyrthosiphon pisum symbiotic bacterium).